The sequence spans 44 residues: Opistoporin-2 (44 aa).

As to expression, expressed by the venom gland.

It localises to the secreted. The protein localises to the target cell membrane. Functionally, at high concentrations, acts as a pore former in cellular membranes and causes the leakage of the cells. At submicromolar concentrations, degranulates granulocytes and has a weak hemolytic activity against human erythrocytes. Also strongly inhibits the production of superoxide anions. Has a strong antibacterial activity against Gram-negative bacteria but is less active against Gram-positive bacteria. Also has antifungal activity. This chain is Opistoporin-2, found in Opistophthalmus carinatus (African yellow leg scorpion).